The chain runs to 386 residues: Patatin-07 (386 aa).

The signal sequence occupies residues 1 to 23; it reads MATTKSFLILFFMILATTSSTCA. Positions 32-229 constitute a PNPLA domain; it reads LSIDGGGIKG…TVADPALLSV (198 aa). The GXGXXG signature appears at 36-41; sequence GGGIKG. The GXSXG signature appears at 75–79; that stretch reads GTSTG. Ser-77 acts as the Nucleophile in catalysis. N-linked (GlcNAc...) asparagine glycans are attached at residues Asn-115 and Asn-202. Asp-215 acts as the Proton acceptor in catalysis. The DGA/G signature appears at 215–217; the sequence is DGA.

It belongs to the patatin family. In terms of tissue distribution, tuber.

Its subcellular location is the vacuole. Probable lipolytic acyl hydrolase (LAH), an activity which is thought to be involved in the response of tubers to pathogens. This is Patatin-07 from Solanum tuberosum (Potato).